Reading from the N-terminus, the 873-residue chain is MVANGHFAGSADGQHSSSYEHGVQVIDEDKEFNPNVSKYLTYENVTPAGFNYHLISVFGSQSTGKSTLLNNLFGTHFSVMSETERRQTTKGIWLSKNKRLELRKDRDPQAKMADNILVMDVEGTDGRERGEDQDFERKSALFALATSEVLIVNIWEHQVGLYQGANMGLLKTVFEVNLELFLKDNKSTPRSLLFFVIRDFLGTTPLQNLQNTLLQDLNRIWSSLSKPAGLENSTINDYFDFAFAGLPHKNFQPDKFMDEVQKLSTRFREGHRDPNSLDRKGTGSIEGGIFLPEYHRRIPADGFAVYAEGVWDQIVNNKDLDLPTQQELLAQFRCDEISREALVAFDEAISPFELKQAEAVQAGYPEVLGGLGPAMRNARMKAVKNFDTEACRYHKRVYQMKKAELQDKIDTRLKALFLGQLGAAHRSGVQEFSESVSAAVKAGQKKGASYDFAEIVRKQRKLAIEKFEQEARSTLVEDAPWSNYQQELSLYQKDLERTSGQLRRDEMRRLATRVERWVRSRLGESVDLEFNALGSGRGGSGAPEFGDKPSEKTIWDRVWTLFVDTVLDAERRFTERASSFDASLDEVDVGLWRLRRKSWGVLRAKIDEEMMEGNLLLKLRENFEDKFRYDDAGVPRIWRPTDDIESVYSQARESTLTLIPLLARFKLAETNAPPPLDKWIGHTPSSATPADEEDLTPIGGVDDDEGKSLEEEMTLIGEAKKQDITVRFKKTADGVYVEAKRSAIGGITQVPLYFYGLLFALGWNEILAVLRNPVYFLLLFVCAIGAYITYQLNLWGPIIKMTEAASHQAVEEGKRRLREFLEASDTGRQAMAMSGARNATEEHEMSRLSRKPAERGGRKNRADEDVDDDDDDF.

Positions 1 to 20 (MVANGHFAGSADGQHSSSYE) are disordered. Over 1–749 (MVANGHFAGS…KRSAIGGITQ (749 aa)) the chain is Cytoplasmic. The region spanning 49–307 (GFNYHLISVF…IPADGFAVYA (259 aa)) is the GB1/RHD3-type G domain. A GTP-binding site is contributed by 59–66 (GSQSTGKS). Residues 482–506 (SNYQQELSLYQKDLERTSGQLRRDE) are a coiled coil. A disordered region spans residues 677–703 (DKWIGHTPSSATPADEEDLTPIGGVDD). The span at 690-703 (ADEEDLTPIGGVDD) shows a compositional bias: acidic residues. The helical transmembrane segment at 750–770 (VPLYFYGLLFALGWNEILAVL) threads the bilayer. The Lumenal segment spans residues 771 to 773 (RNP). The helical transmembrane segment at 774 to 794 (VYFLLLFVCAIGAYITYQLNL) threads the bilayer. Residues 795 to 873 (WGPIIKMTEA…EDVDDDDDDF (79 aa)) lie on the Cytoplasmic side of the membrane. A disordered region spans residues 828-873 (RQAMAMSGARNATEEHEMSRLSRKPAERGGRKNRADEDVDDDDDDF). A compositionally biased stretch (basic and acidic residues) spans 839–863 (ATEEHEMSRLSRKPAERGGRKNRAD). Acidic residues predominate over residues 864–873 (EDVDDDDDDF).

Belongs to the TRAFAC class dynamin-like GTPase superfamily. GB1/RHD3 GTPase family. RHD3 subfamily.

It is found in the endoplasmic reticulum membrane. Functionally, cooperates with the reticulon proteins and tubule-shaping DP1 family proteins to generate and maintain the structure of the tubular endoplasmic reticulum network. Has GTPase activity, which is required for its function in ER organization. The sequence is that of Protein SEY1 from Ajellomyces capsulatus (strain NAm1 / WU24) (Darling's disease fungus).